The chain runs to 85 residues: Cell division protein ZapA (85 aa).

Positions 60–85 (AVNVVHDYLKLKEELERLKGQIKEKD) form a coiled coil.

The protein belongs to the ZapA family. Type 2 subfamily. Homodimer. Interacts with FtsZ.

The protein localises to the cytoplasm. Its function is as follows. Activator of cell division through the inhibition of FtsZ GTPase activity, therefore promoting FtsZ assembly into bundles of protofilaments necessary for the formation of the division Z ring. It is recruited early at mid-cell but it is not essential for cell division. The protein is Cell division protein ZapA of Bacillus licheniformis (strain ATCC 14580 / DSM 13 / JCM 2505 / CCUG 7422 / NBRC 12200 / NCIMB 9375 / NCTC 10341 / NRRL NRS-1264 / Gibson 46).